The chain runs to 386 residues: Lipoyl synthase, mitochondrial (386 aa).

Residues cysteine 110, cysteine 115, cysteine 121, cysteine 141, cysteine 145, cysteine 148, and serine 356 each contribute to the [4Fe-4S] cluster site. The Radical SAM core domain maps to 124-345 (GNDKSKATAT…KEQALEMGFL (222 aa)).

The protein belongs to the radical SAM superfamily. Lipoyl synthase family. It depends on [4Fe-4S] cluster as a cofactor.

The protein resides in the mitochondrion. The enzyme catalyses [[Fe-S] cluster scaffold protein carrying a second [4Fe-4S](2+) cluster] + N(6)-octanoyl-L-lysyl-[protein] + 2 oxidized [2Fe-2S]-[ferredoxin] + 2 S-adenosyl-L-methionine + 4 H(+) = [[Fe-S] cluster scaffold protein] + N(6)-[(R)-dihydrolipoyl]-L-lysyl-[protein] + 4 Fe(3+) + 2 hydrogen sulfide + 2 5'-deoxyadenosine + 2 L-methionine + 2 reduced [2Fe-2S]-[ferredoxin]. Its pathway is protein modification; protein lipoylation via endogenous pathway; protein N(6)-(lipoyl)lysine from octanoyl-[acyl-carrier-protein]: step 2/2. Its function is as follows. Catalyzes the radical-mediated insertion of two sulfur atoms into the C-6 and C-8 positions of the octanoyl moiety bound to the lipoyl domains of lipoate-dependent enzymes, thereby converting the octanoylated domains into lipoylated derivatives. The polypeptide is Lipoyl synthase, mitochondrial (Zygosaccharomyces rouxii (strain ATCC 2623 / CBS 732 / NBRC 1130 / NCYC 568 / NRRL Y-229)).